A 457-amino-acid polypeptide reads, in one-letter code: MQASRHSIQAEPGWYVSAQQPEEAVAADEWSPLLSNEPHRQGSSGASFGLSVFNVMNAIMGSGILGLAYVMANTGILGFSFLLLFVALLASYSVHLLLAMCIHTAVTSYEDLGLFAFGLPGKVVVAGTIIIQNIGAMSSYLLIIKTELPAAISEFLPSDHSGSWYLDGQMLLIIICVGIVFPLSLLPKIGFLGYTSSLSFFFMVFFALVVVIKKWAVPCPVTLDCINEVFQISNATDDCKPKLFHFSKESVYAIPTMAFSFLCHTSVLPIYCELQSPSKKRMQNVTNTAIALSFLVYFVSALFGYLTFYDKVESELLQGYSKYLPHDVIVMAVKLCILFAVLLTAPLIHFPARKALMMILFSNYPFSWIRHSLTTAALNAIIVVLAIYVPDIRNVFGVVGASTSTCLIFVFPGLFYLKLSREDFLSWKKLGALFLLLTGAVVGSFSLVLIIFDWVNK.

At methionine 1 the chain carries N-acetylmethionine. Phosphoserine occurs at positions 4 and 7. Helical transmembrane passes span 48–68 (FGLSVFNVMNAIMGSGILGLA), 70–90 (VMANTGILGFSFLLLFVALLA), 112–132 (LGLFAFGLPGKVVVAGTIIIQ), 171–191 (LLIIICVGIVFPLSLLPKIGF), and 192–212 (LGYTSSLSFFFMVFFALVVVI). A disulfide bridge connects residues cysteine 219 and cysteine 239. Helical transmembrane passes span 251-271 (VYAIPTMAFSFLCHTSVLPIY), 289-309 (AIALSFLVYFVSALFGYLTFY), 328-348 (VIVMAVKLCILFAVLLTAPLI), 372-392 (SLTTAALNAIIVVLAIYVPDI), 395-415 (VFGVVGASTSTCLIFVFPGLF), and 432-452 (ALFLLLTGAVVGSFSLVLIIF).

The protein belongs to the amino acid/polyamine transporter 2 family. In terms of tissue distribution, expressed exclusively in neurons and not in astrocytes and glia cells. Highly expressed in the synapse. Highly expressed in glutamatergic neurons. Primarily expressed in excitatory neurons, with some minor expression in inhibitory neurons.

It localises to the cell membrane. Its subcellular location is the synapse. It carries out the reaction L-glutamine(out) = L-glutamine(in). It catalyses the reaction L-glutamate(out) = L-glutamate(in). Its function is as follows. Amino acid transporter with an apparent selectivity for L-glutamine and L-glutamate. May facilitate glutamine uptake in excitatory neurons. The transport mechanism remains to be elucidated. This Mus musculus (Mouse) protein is Solute carrier family 38 member 6.